Consider the following 336-residue polypeptide: Ribosomal RNA large subunit methyltransferase F (336 aa).

Residues 212-231 (HHLERSRGKPTGKGVRRVRS) show a composition bias toward basic residues. A disordered region spans residues 212-234 (HHLERSRGKPTGKGVRRVRSGRM).

It belongs to the methyltransferase superfamily. METTL16/RlmF family.

The protein resides in the cytoplasm. The catalysed reaction is adenosine(1618) in 23S rRNA + S-adenosyl-L-methionine = N(6)-methyladenosine(1618) in 23S rRNA + S-adenosyl-L-homocysteine + H(+). In terms of biological role, specifically methylates the adenine in position 1618 of 23S rRNA. The protein is Ribosomal RNA large subunit methyltransferase F of Methylobacillus flagellatus (strain ATCC 51484 / DSM 6875 / VKM B-1610 / KT).